The primary structure comprises 224 residues: 3-dehydroquinate dehydratase (224 aa).

3-dehydroquinate-binding positions include 35–37 and Arg-65; that span reads EFR. Residue His-120 is the Proton donor/acceptor of the active site. The active-site Schiff-base intermediate with substrate is Lys-146. Arg-183, Thr-202, and Gln-206 together coordinate 3-dehydroquinate.

Belongs to the type-I 3-dehydroquinase family. Homodimer.

It carries out the reaction 3-dehydroquinate = 3-dehydroshikimate + H2O. The protein operates within metabolic intermediate biosynthesis; chorismate biosynthesis; chorismate from D-erythrose 4-phosphate and phosphoenolpyruvate: step 3/7. Involved in the third step of the chorismate pathway, which leads to the biosynthesis of aromatic amino acids. Catalyzes the cis-dehydration of 3-dehydroquinate (DHQ) and introduces the first double bond of the aromatic ring to yield 3-dehydroshikimate. This is 3-dehydroquinate dehydratase from Methanobrevibacter smithii (strain ATCC 35061 / DSM 861 / OCM 144 / PS).